The chain runs to 1203 residues: Cingulin (1203 aa).

The interval 7–357 (MAEPRGPVDH…VMVSSGSTKA (351 aa)) is head. Positions 25–48 (EPVSGAEMGTLRRGGRRPAKDARA) are disordered. Residues 48–62 (ASTYGVAVRVQGIAG) carry the ZIM motif. Positions 54–67 (AVRVQGIAGQPFVV) are interaction with TJP1/ZO1. Positions 89–127 (GASGALSSDLELPENPYSQVKGFPAPSQSSTSDEEPGAY) are disordered. Residues serine 95, serine 96, serine 135, serine 137, serine 140, serine 155, serine 165, serine 214, serine 217, serine 258, serine 276, serine 338, and serine 351 each carry the phosphoserine modification. A disordered region spans residues 186 to 266 (DSQLGGQARG…LSPLSGFSRS (81 aa)). The segment covering 207 to 231 (EQRKRSKSLDSRLPRDTFEERERQS) has biased composition (basic and acidic residues). The span at 232-266 (TNHWTSSTKYDNHVGTSKQPAQSQNLSPLSGFSRS) shows a compositional bias: polar residues. The stretch at 358 to 1160 (VAGQGELTRK…SLEKDSWRKA (803 aa)) forms a coiled coil. N6-acetyllysine is present on lysine 579. Threonine 712 is modified (phosphothreonine). 2 disordered regions span residues 1034 to 1053 (LASS…LESQ) and 1154 to 1181 (KDSW…EEFD). Residues 1044-1053 (SASLSQLESQ) show a composition bias toward low complexity. The interval 1161 to 1203 (SRSAAESALKNEGLSSDEEFDSVYDPSSIASLLTESNLQTSSC) is tail. Residues serine 1175, serine 1176, and serine 1182 each carry the phosphoserine modification.

Belongs to the cingulin family. As to quaternary structure, homodimer. Interacts with TJP1/ZO1. Interacts with SPEF1. As to expression, localized on the cytoplasmic face of tight junctions of polarized epithelia and some endothelia. Expressed in pancreas, kidney, liver and lung, but not in skeletal muscle, placenta, brain or heart.

Its subcellular location is the cell junction. It localises to the tight junction. Probably plays a role in the formation and regulation of the tight junction (TJ) paracellular permeability barrier. The polypeptide is Cingulin (Homo sapiens (Human)).